Here is a 363-residue protein sequence, read N- to C-terminus: MLDLDLRRRQGEFRLDVRLSAGPGVTALYGRSGSGKTSVINMVAGLSRPDEGSISVDGRVLFDSRSGIDLPPEARRLGYVFQEHRLFPHLSVRGNLEFGQKLLPSAERTQSLDKVVELLGIESLLDRRPAKLSGGEKQRVAIGRALLASPRILLMDEPLAALDPARKAEVLPFIAQLARRFSVPILYVSHSMDEVLRLADTLALMDGGKVAASGPLESLMGDPGLRPLTGRYEAGAVIGAVVSSHDSGFGISRLAFDGGTLIVGRSELPVGAKVRLRIHARDVAIAIEPPDRVSIRNVLPAIVVSVAPADSFLVDVILACGPTRFWVQITTLAQAQLNLVPGMRVHALIKALTIARGDVASVD.

Residues 1–232 form the ABC transporter domain; that stretch reads MLDLDLRRRQ…PGLRPLTGRY (232 aa). 30-37 is an ATP binding site; sequence GRSGSGKT. The region spanning 292–358 is the Mop domain; sequence RVSIRNVLPA…IKALTIARGD (67 aa).

This sequence belongs to the ABC transporter superfamily. Molybdate importer (TC 3.A.1.8) family. The complex is composed of two ATP-binding proteins (ModC), two transmembrane proteins (ModB) and a solute-binding protein (ModA).

Its subcellular location is the cell inner membrane. The catalysed reaction is molybdate(out) + ATP + H2O = molybdate(in) + ADP + phosphate + H(+). Part of the ABC transporter complex ModABC involved in molybdenum import. Responsible for energy coupling to the transport system. This Paramagnetospirillum magneticum (strain ATCC 700264 / AMB-1) (Magnetospirillum magneticum) protein is Molybdenum import ATP-binding protein ModC.